The chain runs to 353 residues: Basic membrane protein C (353 aa).

The signal sequence occupies residues M1 to A16. C17 is lipidated: N-palmitoyl cysteine. C17 carries the S-diacylglycerol cysteine lipid modification.

The protein belongs to the BMP lipoprotein family. In terms of assembly, monomer.

Its subcellular location is the cell inner membrane. In terms of biological role, may be part of an ABC-type nucleoside uptake system involved in the purine salvage pathway. This is Basic membrane protein C (bmpC) from Borreliella burgdorferi (strain ATCC 35210 / DSM 4680 / CIP 102532 / B31) (Borrelia burgdorferi).